Consider the following 447-residue polypeptide: N-succinylarginine dihydrolase (447 aa).

Substrate contacts are provided by residues 19-28 (AGLSFGNKAS), Asn110, and 137-138 (HR). Glu174 is a catalytic residue. Arg212 contacts substrate. The active site involves His248. Substrate-binding residues include Asp250 and Asn359. Cys365 (nucleophile) is an active-site residue.

The protein belongs to the succinylarginine dihydrolase family. In terms of assembly, homodimer.

The catalysed reaction is N(2)-succinyl-L-arginine + 2 H2O + 2 H(+) = N(2)-succinyl-L-ornithine + 2 NH4(+) + CO2. The protein operates within amino-acid degradation; L-arginine degradation via AST pathway; L-glutamate and succinate from L-arginine: step 2/5. Functionally, catalyzes the hydrolysis of N(2)-succinylarginine into N(2)-succinylornithine, ammonia and CO(2). This is N-succinylarginine dihydrolase from Escherichia coli O157:H7.